A 588-amino-acid chain; its full sequence is Probable urocanate hydratase (588 aa).

Residues 1–15 (MDTPSAAAETSEPSA) show a composition bias toward low complexity. Residues 1–22 (MDTPSAAAETSEPSAQWQAYRG) form a disordered region. Residues 62 to 63 (GG), Q140, 188 to 190 (GMG), E208, R213, 254 to 255 (NA), 275 to 279 (QTSAH), and Y334 contribute to the NAD(+) site. C431 is an active-site residue. Residue G520 coordinates NAD(+).

This sequence belongs to the urocanase family. The cofactor is NAD(+).

It is found in the cytoplasm. It carries out the reaction 4-imidazolone-5-propanoate = trans-urocanate + H2O. Its pathway is amino-acid degradation; L-histidine degradation into L-glutamate; N-formimidoyl-L-glutamate from L-histidine: step 2/3. Its function is as follows. Catalyzes the conversion of urocanate to 4-imidazolone-5-propionate. In Halobacterium salinarum (strain ATCC 29341 / DSM 671 / R1), this protein is Probable urocanate hydratase.